The primary structure comprises 354 residues: Ion-translocating oxidoreductase complex subunit D (354 aa).

Helical transmembrane passes span 19–39 (IMLL…YYFG), 40–60 (FGVL…EFLV), 77–99 (AAVT…LSFF), and 119–139 (IFNP…ILMT). At Thr187 the chain carries FMN phosphoryl threonine. A run of 5 helical transmembrane segments spans residues 221 to 241 (WISI…FNVI), 245 to 265 (IPVS…YFFK), 268 to 288 (MYYP…FFIA), 295 to 315 (SITK…IWLI), and 319 to 339 (GNYP…VPLI).

This sequence belongs to the NqrB/RnfD family. As to quaternary structure, the complex is composed of six subunits: RnfA, RnfB, RnfC, RnfD, RnfE and RnfG. It depends on FMN as a cofactor.

Its subcellular location is the cell inner membrane. Part of a membrane-bound complex that couples electron transfer with translocation of ions across the membrane. The sequence is that of Ion-translocating oxidoreductase complex subunit D from Buchnera aphidicola subsp. Baizongia pistaciae (strain Bp).